We begin with the raw amino-acid sequence, 1050 residues long: ATP-dependent DNA helicase MPH1 (1050 aa).

Positions 95–262 (IVQRAFYHNL…EIIDNLNISK (168 aa)) constitute a Helicase ATP-binding domain. 108 to 115 (LPTGLGKT) contributes to the ATP binding site. Residues 210-213 (DEAH) carry the DEAH box motif. The Helicase C-terminal domain maps to 431-631 (KIEAMMEELD…LIDLKEQNRM (201 aa)). Disordered stretches follow at residues 493–524 (DESN…AQIN) and 743–821 (DSDE…PPKR). A compositionally biased stretch (basic residues) spans 499 to 508 (KKSKGKRVGK). A compositionally biased stretch (basic and acidic residues) spans 786 to 799 (RTLDQHHSASEERG). Over residues 800-810 (INSNFSHESNL) the composition is skewed to polar residues.

This sequence belongs to the DEAD box helicase family. DEAH subfamily. FANCM sub-subfamily. In terms of assembly, interacts with the MHF histone-fold complex to form the FANCM-MHF complex.

It is found in the nucleus. It catalyses the reaction ATP + H2O = ADP + phosphate + H(+). Its function is as follows. ATP-dependent DNA helicase involved in DNA damage repair by homologous recombination and in genome maintenance. Capable of unwinding D-loops. Plays a role in limiting crossover recombinants during mitotic DNA double-strand break (DSB) repair. Component of a FANCM-MHF complex which promotes gene conversion at blocked replication forks, probably by reversal of the stalled fork. The protein is ATP-dependent DNA helicase MPH1 of Scheffersomyces stipitis (strain ATCC 58785 / CBS 6054 / NBRC 10063 / NRRL Y-11545) (Yeast).